The chain runs to 361 residues: Chalcone synthase A (361 aa).

Residue cysteine 168 is part of the active site.

Belongs to the thiolase-like superfamily. Chalcone/stilbene synthases family.

It carries out the reaction (E)-4-coumaroyl-CoA + 3 malonyl-CoA + 3 H(+) = 2',4,4',6'-tetrahydroxychalcone + 3 CO2 + 4 CoA. Its pathway is secondary metabolite biosynthesis; flavonoid biosynthesis. Its function is as follows. The primary product of this enzyme is 4,2',4',6'-tetrahydroxychalcone (also termed naringenin-chalcone or chalcone) which can under specific conditions spontaneously isomerize into naringenin. The polypeptide is Chalcone synthase A (CHSA) (Ipomoea cordatotriloba (Tievine)).